The sequence spans 875 residues: Phosphoenolpyruvate carboxylase (875 aa).

Catalysis depends on residues His137 and Lys542.

It belongs to the PEPCase type 1 family. Mg(2+) is required as a cofactor.

It carries out the reaction oxaloacetate + phosphate = phosphoenolpyruvate + hydrogencarbonate. Its function is as follows. Forms oxaloacetate, a four-carbon dicarboxylic acid source for the tricarboxylic acid cycle. The polypeptide is Phosphoenolpyruvate carboxylase (Pseudomonas putida (strain ATCC 47054 / DSM 6125 / CFBP 8728 / NCIMB 11950 / KT2440)).